Reading from the N-terminus, the 128-residue chain is Nanos homolog 1 (128 aa).

Residues 7-23 (FDSWSDYLGLSSLISRG) form an essential for its translational repressor activity region. The tract at residues 25–52 (QPQREGERPRWDVLSPASAEPLPSNESV) is disordered. The Nanos-type zinc finger occupies 56–110 (GCGFCRSNREALSLYTSHRLRALDGRVLCPVLRGYTCPLCGANGDWAHTMRYCPL). Positions 57, 60, 73, 84, 92, 95, 103, and 108 each coordinate Zn(2+). 2 short sequence motifs (C2HC) span residues 57–84 (CGFCRSNREALSLYTSHRLRALDGRVLC) and 92–108 (CPLCGANGDWAHTMRYC).

The protein belongs to the nanos family. As to quaternary structure, interacts with ccnb1. In terms of tissue distribution, ovary and testis.

Its subcellular location is the cytoplasm. The protein resides in the perinuclear region. Functionally, acts as a translational repressor. Can mediate repression affecting different steps in the translation process: cap-driven, IRES-driven, polyadenylated RNAs or nonpolyadenylated RNAs. Essential for the development of primordial germ cells (PGCs) by ensuring their proper migration and survival. The polypeptide is Nanos homolog 1 (nanos1) (Xenopus laevis (African clawed frog)).